The following is a 286-amino-acid chain: 4-diphosphocytidyl-2-C-methyl-D-erythritol kinase (286 aa).

The active site involves Lys11. 93–103 contacts ATP; the sequence is PFGAGLGGGSS. Asp135 is a catalytic residue.

This sequence belongs to the GHMP kinase family. IspE subfamily.

The enzyme catalyses 4-CDP-2-C-methyl-D-erythritol + ATP = 4-CDP-2-C-methyl-D-erythritol 2-phosphate + ADP + H(+). The protein operates within isoprenoid biosynthesis; isopentenyl diphosphate biosynthesis via DXP pathway; isopentenyl diphosphate from 1-deoxy-D-xylulose 5-phosphate: step 3/6. Catalyzes the phosphorylation of the position 2 hydroxy group of 4-diphosphocytidyl-2C-methyl-D-erythritol. This chain is 4-diphosphocytidyl-2-C-methyl-D-erythritol kinase, found in Chlorobaculum parvum (strain DSM 263 / NCIMB 8327) (Chlorobium vibrioforme subsp. thiosulfatophilum).